Consider the following 122-residue polypeptide: Large ribosomal subunit protein bL12 (122 aa).

This sequence belongs to the bacterial ribosomal protein bL12 family. In terms of assembly, homodimer. Part of the ribosomal stalk of the 50S ribosomal subunit. Forms a multimeric L10(L12)X complex, where L10 forms an elongated spine to which 2 to 4 L12 dimers bind in a sequential fashion. Binds GTP-bound translation factors.

Forms part of the ribosomal stalk which helps the ribosome interact with GTP-bound translation factors. Is thus essential for accurate translation. This Blochmanniella pennsylvanica (strain BPEN) protein is Large ribosomal subunit protein bL12.